Reading from the N-terminus, the 236-residue chain is MAGSVDEEALHQLYLWVDNIPLSRPKRNLSRDFSDGVLVAEVIKFYFPKMVEMHNYVPANSLQQKLSNWSHLNRKVLNKLNFSVPEDVMRKIAQCAPGVVELVLIPLRQRLEERQRRRKQGIGSLQELAPQDGTDYMDVGLSQKARGEGVPDPQGRGQLREGRLPVPRPPGDSQALQSDPSFILQIAEKEQELLASQETVQVLQMKVRRLEHLLQLKNVRIEDLSRRLQQAERKQR.

In terms of domain architecture, Calponin-homology (CH) spans 7–112; that stretch reads EEALHQLYLW…VLIPLRQRLE (106 aa). The segment at 118–177 is disordered; that stretch reads RKQGIGSLQELAPQDGTDYMDVGLSQKARGEGVPDPQGRGQLREGRLPVPRPPGDSQALQ. The interval 183–236 is essential for homodimerization and microtubule bundling activity; that stretch reads ILQIAEKEQELLASQETVQVLQMKVRRLEHLLQLKNVRIEDLSRRLQQAERKQR.

As to quaternary structure, homodimer. Interacts with actin, TJP1, CGN and CDH1.

The protein localises to the cytoplasm. It localises to the cell projection. It is found in the cilium. The protein resides in the flagellum. Its subcellular location is the cytoskeleton. The protein localises to the cilium axoneme. It localises to the apical cell membrane. It is found in the basolateral cell membrane. The protein resides in the stress fiber. Its subcellular location is the microvillus. The protein localises to the lamellipodium. It localises to the filopodium. Microtubule-associated protein involved in the stabilization of microtubules along the axis of migration during radial intercalation. Promotes the establishment and stabilization of an axis of microtubules required for the active migration of cells into the outer epithelium. Microtubule-associated protein that promotes microtubule bundling and stabilizes microtubules against depolymerization in response to cold shock. Essential for ciliary central apparatus formation which requires both its microtubule-binding and bundling activities and for ciliary localization of HYDIN and SPAG6 in ependymal cilia. Binds actin in intestinal epithelial cells (IECs), essential for IECs survival and contributes to formation of filopodia and lamellipodia in migrating IECs. Regulates planar cell polarity signaling pathway and asymmetric microtubule accumulation in ciliated epithelia. This Bos taurus (Bovine) protein is Sperm flagellar protein 1 (SPEF1).